A 336-amino-acid chain; its full sequence is Tetraacyldisaccharide 4'-kinase (336 aa).

Residue 60 to 67 (TIGGTGKT) coordinates ATP.

This sequence belongs to the LpxK family.

The catalysed reaction is a lipid A disaccharide + ATP = a lipid IVA + ADP + H(+). It functions in the pathway glycolipid biosynthesis; lipid IV(A) biosynthesis; lipid IV(A) from (3R)-3-hydroxytetradecanoyl-[acyl-carrier-protein] and UDP-N-acetyl-alpha-D-glucosamine: step 6/6. Its function is as follows. Transfers the gamma-phosphate of ATP to the 4'-position of a tetraacyldisaccharide 1-phosphate intermediate (termed DS-1-P) to form tetraacyldisaccharide 1,4'-bis-phosphate (lipid IVA). In Pseudomonas putida (strain W619), this protein is Tetraacyldisaccharide 4'-kinase.